Consider the following 183-residue polypeptide: Endoribonuclease YbeY (183 aa).

Zn(2+)-binding residues include histidine 118, histidine 122, and histidine 128. The segment at glutamate 156 to histidine 183 is disordered.

The protein belongs to the endoribonuclease YbeY family. Zn(2+) is required as a cofactor.

It localises to the cytoplasm. Its function is as follows. Single strand-specific metallo-endoribonuclease involved in late-stage 70S ribosome quality control and in maturation of the 3' terminus of the 16S rRNA. The sequence is that of Endoribonuclease YbeY from Saccharopolyspora erythraea (strain ATCC 11635 / DSM 40517 / JCM 4748 / NBRC 13426 / NCIMB 8594 / NRRL 2338).